The primary structure comprises 649 residues: ATP-dependent zinc metalloprotease FtsH (649 aa).

At 1–18 the chain is on the cytoplasmic side; the sequence is MQCSYPLARQLERSSALN. The helical transmembrane segment at 19–39 threads the bilayer; it reads NNLFQKAAIWLVIALVLFTVF. Residues 40–115 lie on the Periplasmic side of the membrane; the sequence is KQFDKPRAQD…VTGKADDEPN (76 aa). Residues 116 to 136 traverse the membrane as a helical segment; the sequence is VLVQALYYLGPTLLIIVFWFY. Residues 137-649 are Cytoplasmic-facing; that stretch reads MMRQMQGGGK…PATARADETV (513 aa). Position 210 to 217 (210 to 217) interacts with ATP; it reads GPPGTGKT. H432 contacts Zn(2+). Residue E433 is part of the active site. Residues H436 and D508 each coordinate Zn(2+). The segment at 606 to 649 is disordered; the sequence is IMAGRPPRPPRGAQGPNSGGNTPPGGSPVAPTNAPATARADETV. Over residues 616 to 626 the composition is skewed to low complexity; the sequence is RGAQGPNSGGN.

The protein in the central section; belongs to the AAA ATPase family. This sequence in the C-terminal section; belongs to the peptidase M41 family. Homohexamer. Zn(2+) serves as cofactor.

Its subcellular location is the cell inner membrane. Acts as a processive, ATP-dependent zinc metallopeptidase for both cytoplasmic and membrane proteins. Plays a role in the quality control of integral membrane proteins. This chain is ATP-dependent zinc metalloprotease FtsH, found in Cupriavidus metallidurans (strain ATCC 43123 / DSM 2839 / NBRC 102507 / CH34) (Ralstonia metallidurans).